Here is a 617-residue protein sequence, read N- to C-terminus: Prothrombin (617 aa).

The signal sequence occupies residues 1–24 (MLHVRGLGLPGCLALAALASLVHS). The propeptide occupies 25–43 (QHVFLAPQQALSLLQRVRR). One can recognise a Gla domain in the interval 44-90 (ANSGFLEELRKGNLERECVEEQCSYEEAFEALESPQDTDVFWAKYTV). Glu-50, Glu-51, Glu-58, Glu-60, Glu-63, Glu-64, Glu-69, Glu-70, Glu-73, and Glu-76 each carry 4-carboxyglutamate. An intrachain disulfide couples Cys-61 to Cys-66. Intrachain disulfides connect Cys-91/Cys-104, Cys-109/Cys-187, Cys-130/Cys-170, Cys-158/Cys-182, Cys-215/Cys-292, Cys-236/Cys-276, Cys-264/Cys-287, Cys-332/Cys-478, Cys-387/Cys-403, and Cys-532/Cys-546. 2 Kringle domains span residues 109 to 187 (CAMD…IPVC) and 215 to 292 (CLLE…LNYC). Asn-120 and Asn-144 each carry an N-linked (GlcNAc...) asparagine glycan. A Peptidase S1 domain is found at 360–614 (IVEGWDAEKG…LKRWMQKVID (255 aa)). His-402 functions as the Charge relay system in the catalytic mechanism. A glycan (N-linked (GlcNAc...) asparagine) is linked at Asn-412. Asp-458 acts as the Charge relay system in catalysis. The high affinity receptor-binding region which is also known as the TP508 peptide stretch occupies residues 547–569 (AGFKVNDTKRGDACEGDSGGPFV). A glycan (N-linked (GlcNAc...) asparagine) is linked at Asn-552. Cys-560 and Cys-590 are oxidised to a cystine. Ser-564 serves as the catalytic Charge relay system.

The protein belongs to the peptidase S1 family. As to quaternary structure, heterodimer (named alpha-thrombin) of a light and a heavy chain; disulfide-linked. Forms a heterodimer with SERPINA5. In plasma, interacts (via N-terminus) with alpha-1-microglobulin; this interaction does not prevent the activation of prothrombin to thrombin. The gamma-carboxyglutamyl residues, which bind calcium ions, result from the carboxylation of glutamyl residues by a microsomal enzyme, the vitamin K-dependent carboxylase. The modified residues are necessary for the calcium-dependent interaction with a negatively charged phospholipid surface, which is essential for the conversion of prothrombin to thrombin. Post-translationally, in the penultimate step of the coagulation cascade, prothrombin is converted to thrombin by the prothrombinase complex composed of factor Xa (F10), cofactor Va (F5), and phospholipids. This activation requires factor Xa-catalyzed sequential cleavage at 2 sites, Arg-310 and Arg-359, along 2 possible pathways. In the first pathway, the first cleavage occurs at Arg-310, leading to the formation of the inactive intermediate prethrombin-2. This pathway preferentially occurs on platelets and in the absence of cofactor Va. In the second pathway, the first cleavage occurs at Arg-359, which separates protease domain into 2 chains that remain connected through a disulfide bond and generates the active intermediate meizothrombin. The presence of cofactor Va directs activation along the meizothrombin pathway and greatly accelerates the rate of cleavage at Arg-359, but has a smaller effect on the cleavage of meizothrombin at Arg-310. Meizothrombin accumulates as an intermediate when prothrombinase is assembled on the membrane of red blood cells.

It catalyses the reaction Selective cleavage of Arg-|-Gly bonds in fibrinogen to form fibrin and release fibrinopeptides A and B.. Its activity is regulated as follows. Activity is promoted in the presence of negatively charged surfaces, such as polyphosphate and dextran sulfate. Inhibited by SERPINA5. Thrombin, which cleaves bonds after Arg and Lys, converts fibrinogen to fibrin and activates factors V, VII, VIII, XIII, and, in complex with thrombomodulin, protein C. Functions in blood homeostasis, inflammation and wound healing. Activates coagulation factor XI (F11); activation is promoted by the contact with negatively charged surfaces. Triggers the production of pro-inflammatory cytokines, such as MCP-1/CCL2 and IL8/CXCL8, in endothelial cells. The sequence is that of Prothrombin (F2) from Rattus norvegicus (Rat).